Reading from the N-terminus, the 510-residue chain is MTLLSRVLGLVRDVVIAHLIGAGAAADVFLFANRIPNFLRRLFAEGAFSQAFVPVLAEYQQSGDMNKTREFIGKVSGTLGGLVSIVTILAMVGSPHVAALFGMGWFTDWMNDGPDAHKFEQASLLLKITFPYLWFVTFVAFSGAVLNTIGKFGVMSFSPVLLNIAMIATALFLAPQMDNPDLALAIGIFLGGLLQFLFQIPFMKQAGLLVKPKWAWRDEGVTKIRKLMIPALFGVSVSQINLLLDTVIASFLMTGSISWLYYSDRLLEFPLGLFGIAISTVILPTLARHHVNREGDSAKSAVDFRNTMDWGVRMIFLLGVPAAIGIAVLAQPMLLTLFMRGNFMLNDVYAASYSLRAFNAGLLSFMLIKILANGYYARQDTKTPVKIGIIAMVSNMGFNLLAIPFSYVGLAIASAMSATLNAYLLYRGLAKADVYHFSRKSAVFFVKVLLAAIAMGAAVWYYVPEINQWAKMDFFMRVYWLVWLIVLAAIVYGATLILLGVRKHHLLTKN.

12 helical membrane passes run 13-33, 81-101, 130-150, 154-174, 182-202, 240-260, 266-286, 315-335, 357-377, 396-416, 443-463, and 481-501; these read DVVI…LFAN, GLVS…AALF, FPYL…NTIG, VMSF…LFLA, LALA…QIPF, INLL…ISWL, LLEF…LPTL, IFLL…PMLL, AFNA…GYYA, MGFN…ASAM, VFFV…WYYV, and LVWL…LLGV.

The protein belongs to the MurJ/MviN family.

It localises to the cell inner membrane. It functions in the pathway cell wall biogenesis; peptidoglycan biosynthesis. Involved in peptidoglycan biosynthesis. Transports lipid-linked peptidoglycan precursors from the inner to the outer leaflet of the cytoplasmic membrane. The sequence is that of Probable lipid II flippase MurJ from Haemophilus influenzae (strain ATCC 51907 / DSM 11121 / KW20 / Rd).